The chain runs to 122 residues: Large ribosomal subunit protein bL12 (122 aa).

This sequence belongs to the bacterial ribosomal protein bL12 family. As to quaternary structure, homodimer. Part of the ribosomal stalk of the 50S ribosomal subunit. Forms a multimeric L10(L12)X complex, where L10 forms an elongated spine to which 2 to 4 L12 dimers bind in a sequential fashion. Binds GTP-bound translation factors.

Forms part of the ribosomal stalk which helps the ribosome interact with GTP-bound translation factors. Is thus essential for accurate translation. This Latilactobacillus sakei subsp. sakei (strain 23K) (Lactobacillus sakei subsp. sakei) protein is Large ribosomal subunit protein bL12.